The following is an 87-amino-acid chain: uncharacterized protein (87 aa).

Residues 42–62 (LADALYSAGSAAFTIAASLVA) traverse the membrane as a helical segment.

This sequence belongs to the SPP1 holin family.

It is found in the membrane. This is an uncharacterized protein from Bacillus licheniformis.